The following is a 316-amino-acid chain: MAKRDGMKLRDELTFDTSRAVKAVSWGEAIDRFQSWYDDQRGTQIVVENELGETVGFDMPNRFTPEYREMLYAKAQSLERGLRERWGSLLHTGMVTLTASSTDDEGRLRPPLEHFEDLLESWEAVRRALARVLEGREWEYLAILEPHESGYVHIHLGVFVRGPVVAEQFEPVLDAHLRNCPTAGEDAHQVFDENGDEDAVRVRRSSHPSRSGGVENLGAYLAAYMAGEYGSEPSEMPENVRAFYATMWASGRQWFRPSNGAQELMQPEEDDEGDSIEEWEMVGIAPEGDLGDIIEVDPSEPRSDPYRRLRTPPPGG.

The segment at alanine 285–glycine 316 is disordered. Acidic residues predominate over residues aspartate 289–proline 298.

In terms of biological role, possibly necessary for replication. This is an uncharacterized protein from Halobacterium salinarum (Halobacterium halobium).